The sequence spans 1115 residues: Gamma tubulin complex adapter mto1 (1115 aa).

The segment at 25–180 (LTDEEVRRIL…NYISSSLDQL (156 aa)) is disordered. Basic and acidic residues-rich tracts occupy residues 28–41 (EEVRRILSPRKEGS) and 56–71 (EASHKYDFEIDRDSLK). Polar residues-rich tracts occupy residues 72–102 (SDSGSPRLHQNATAPTSSTPLQSPDESVNKL), 119–130 (DTTNFDRLNDNI), and 139–151 (PVLTANQGFQSQE). Residue Ser94 is modified to Phosphoserine. The span at 165–176 (SDPSSPNYISSS) shows a compositional bias: low complexity. Residues 445-915 (NEALLLRKQE…ERNSLIKNIV (471 aa)) adopt a coiled-coil conformation. The interval 523–537 (LMRMEQQWREDVDQL) is required for interaction with mto2. Residues 1001–1011 (GSTSSIPNSPR) are compositionally biased toward polar residues. 2 disordered regions span residues 1001 to 1037 (GSTSSIPNSPRASKRVSLDSEDKKLVPASPDKSAVQR) and 1067 to 1115 (EQEG…QEHK). Phosphoserine is present on residues Ser1005 and Ser1009. Composition is skewed to basic and acidic residues over residues 1016–1025 (VSLDSEDKKL) and 1067–1084 (EQEGRKRDKLGARERLQD). The stretch at 1072 to 1102 (KRDKLGARERLQDLIRQNRSLSRQIKTDKES) forms a coiled coil. Composition is skewed to polar residues over residues 1086 to 1095 (IRQNRSLSRQ) and 1104 to 1115 (SRSPSISSQEHK).

Interacts with mto2; the interaction is direct and required for efficient binding to the gamma-tubulin complex. Interacts with gamma tubulin complex subunits alp4, alp6 and gtb1. Interacts with mcp6.

The protein localises to the cytoplasm. It localises to the cytoskeleton. Its subcellular location is the microtubule organizing center. The protein resides in the spindle pole body. Its function is as follows. Spindle pole body (SPB) component that acts as the gamma-tubulin complex-binding protein of the SPB outer plaque. Promotes nucleation of all cytoplasmic microtubules by recruiting the gamma-tubulin complex to the spindle pole body (SPB), to the interphase microtubule organizing center (iMTOC), and to the equatorial MTOC (eMTOC) during anaphase. This chain is Gamma tubulin complex adapter mto1, found in Schizosaccharomyces pombe (strain 972 / ATCC 24843) (Fission yeast).